The primary structure comprises 139 residues: Large-conductance mechanosensitive channel (139 aa).

The next 2 membrane-spanning stretches (helical) occupy residues 9 to 29 (AFAV…GAAF) and 79 to 99 (IQTV…VKAI).

The protein belongs to the MscL family. As to quaternary structure, homopentamer.

It is found in the cell inner membrane. Channel that opens in response to stretch forces in the membrane lipid bilayer. May participate in the regulation of osmotic pressure changes within the cell. This is Large-conductance mechanosensitive channel from Pseudomonas putida (strain ATCC 47054 / DSM 6125 / CFBP 8728 / NCIMB 11950 / KT2440).